The primary structure comprises 141 residues: Putative pre-16S rRNA nuclease (141 aa).

It belongs to the YqgF nuclease family.

It localises to the cytoplasm. Functionally, could be a nuclease involved in processing of the 5'-end of pre-16S rRNA. The chain is Putative pre-16S rRNA nuclease from Coxiella burnetii (strain CbuG_Q212) (Coxiella burnetii (strain Q212)).